The following is a 301-amino-acid chain: Golgi to ER traffic protein 2 (301 aa).

The Cytoplasmic portion of the chain corresponds to 1-167; sequence MSEPVVDTAE…LEYNTYNQKL (167 aa). Over residues 42–55 the composition is skewed to low complexity; it reads SQGSSVKTSGVKSV. The interval 42 to 93 is disordered; sequence SQGSSVKTSGVKSVLDQEKEATSSHDDDPEIQDITEITTPPPRTPPIGEDAP. Over residues 56–67 the composition is skewed to basic and acidic residues; the sequence is LDQEKEATSSHD. Residues 168–188 form a helical membrane-spanning segment; the sequence is WKFRFLLVRVLVTLFNFFYHY. Over 189 to 214 the chain is Lumenal; it reads TSISDFHASNYAYVRDLSSEEYPVRD. The helical transmembrane segment at 215-234 threads the bilayer; it reads FFTWFATSEVVLVAAYYSVF. Over 235-278 the chain is Cytoplasmic; it reads HSLGLFHAANQNSIILKVMSMGSMILPQLESYKPLVARFLGYYE. The chain crosses the membrane as a helical span at residues 279–299; that stretch reads LLGIVLGGLSLVIVLFGLLSF. The Lumenal segment spans residues 300–301; the sequence is AN.

It belongs to the GET2 family. As to quaternary structure, component of the Golgi to ER traffic (GET) complex, which is composed of GET1, GET2 and GET3. Within the complex, GET1 and GET2 form a heterotetramer which is stabilized by phosphatidylinositol binding and which binds to the GET3 homodimer.

The protein resides in the endoplasmic reticulum membrane. The protein localises to the golgi apparatus membrane. In terms of biological role, required for the post-translational delivery of tail-anchored (TA) proteins to the endoplasmic reticulum. Together with GET1, acts as a membrane receptor for soluble GET3, which recognizes and selectively binds the transmembrane domain of TA proteins in the cytosol. The GET complex cooperates with the HDEL receptor ERD2 to mediate the ATP-dependent retrieval of resident ER proteins that contain a C-terminal H-D-E-L retention signal from the Golgi to the ER. The sequence is that of Golgi to ER traffic protein 2 from Candida dubliniensis (strain CD36 / ATCC MYA-646 / CBS 7987 / NCPF 3949 / NRRL Y-17841) (Yeast).